The sequence spans 299 residues: Cytosolic sulfotransferase 1 (299 aa).

51-56 contributes to the 3'-phosphoadenylyl sulfate binding site; the sequence is KAGTTW. H113 (proton acceptor) is an active-site residue. Residues R135, S143, Y199, 233-238, and 261-263 contribute to the 3'-phosphoadenylyl sulfate site; these read VQFDAM and RKG.

The protein belongs to the sulfotransferase 1 family. Expressed in liver.

The protein localises to the cytoplasm. Inhibited by Co(2+), Zn(2+), Cd(2+) and Pb(2+) ions. Inactivated by Hg(2+) and Cu(2+) ions. Its function is as follows. Sulfotransferase that utilizes 3'-phospho-5'-adenylyl sulfate (PAPS) as sulfonate donor to catalyze the sulfate conjugation of a variety of xenobiotic and endogenous compounds, including 2-naphthol, hydroxychlorobiphenyls, dopamine and T3 (triiodo-L-thyronine). This Danio rerio (Zebrafish) protein is Cytosolic sulfotransferase 1.